A 294-amino-acid chain; its full sequence is tRNA dimethylallyltransferase (294 aa).

Gly-10–Thr-17 contacts ATP. Thr-12 to Thr-17 provides a ligand contact to substrate. Residues Asp-35–Gln-38 form an interaction with substrate tRNA region.

It belongs to the IPP transferase family. In terms of assembly, monomer. Requires Mg(2+) as cofactor.

It carries out the reaction adenosine(37) in tRNA + dimethylallyl diphosphate = N(6)-dimethylallyladenosine(37) in tRNA + diphosphate. In terms of biological role, catalyzes the transfer of a dimethylallyl group onto the adenine at position 37 in tRNAs that read codons beginning with uridine, leading to the formation of N6-(dimethylallyl)adenosine (i(6)A). This Streptococcus gordonii (strain Challis / ATCC 35105 / BCRC 15272 / CH1 / DL1 / V288) protein is tRNA dimethylallyltransferase.